The sequence spans 736 residues: Glycogen [starch] synthase, muscle (736 aa).

The residue at position 8 (Ser-8) is a Phosphoserine; by AMPK and PKA. The residue at position 11 (Ser-11) is a Phosphoserine. Lys-39 is a binding site for UDP. UDP-alpha-D-glucose-binding residues include His-205 and Arg-211. Positions 291, 292, 294, 297, and 301 each coordinate alpha-D-glucose 6-phosphate. Arg-331 is a binding site for UDP. UDP-alpha-D-glucose is bound at residue Arg-331. At Ser-412 the chain carries Phosphoserine. His-501 is a binding site for alpha-D-glucose 6-phosphate. Positions 510, 512, and 513 each coordinate UDP-alpha-D-glucose. Thr-515 is a UDP binding site. Alpha-D-glucose 6-phosphate contacts are provided by Arg-582 and Arg-586. The segment at 631 to 736 (TQGYRYPRPA…PASSLGEERN (106 aa)) is disordered. Phosphoserine; by DYRK2, GSK3-alpha, GSK3-beta and PASK is present on Ser-641. Ser-645 and Ser-649 each carry phosphoserine; by GSK3-alpha and GSK3-beta. Ser-652 bears the Phosphoserine mark. Residue Ser-653 is modified to Phosphoserine; by GSK3-alpha and GSK3-beta. At Ser-657 the chain carries Phosphoserine; by CK2. Over residues 658 to 681 (EDEEEPRDLPPDEDDERYDEDEEA) the composition is skewed to acidic residues. Residues 682–695 (AKDRRNIRAPEWPR) are compositionally biased toward basic and acidic residues. Ser-698 is subject to Phosphoserine. The residue at position 700 (Thr-700) is a Phosphothreonine. Residue Ser-709 is modified to Phosphoserine. Residues 714 to 727 (PSSSVSTPSEPLSP) are compositionally biased toward low complexity. Thr-720 carries the post-translational modification Phosphothreonine. Phosphoserine occurs at positions 726 and 730.

This sequence belongs to the glycosyltransferase 3 family. As to quaternary structure, part of the GYS1-GYG1 complex, a heterooctamer composed of a tetramer of GYS1 and 2 dimers of GYG1, where each GYS1 protomer binds to one GYG1 subunit (via GYG1 C-terminus); the GYS1 tetramer may dissociate from GYG1 dimers to continue glycogen polymerization on its own. Post-translationally, phosphorylation at Ser-8 by AMPK inactivates the enzyme activity. Primed phosphorylation at Ser-657 (site 5) by CSNK2A1 and CSNK2A2 is required for inhibitory phosphorylation at Ser-641 (site 3a), Ser-645 (site 3b), Ser-649 (site 3c) and Ser-653 (site 4) by GSK3A an GSK3B. Phosphorylated at Ser-641 by PASK, leading to inactivation; phosphorylation by PASK is inhibited by glycogen. Phosphorylated at Ser-641 by DYRK2, leading to inactivation. Dephosphorylation at Ser-641 and Ser-645 by PP1 activates the enzyme.

The catalysed reaction is [(1-&gt;4)-alpha-D-glucosyl](n) + UDP-alpha-D-glucose = [(1-&gt;4)-alpha-D-glucosyl](n+1) + UDP + H(+). Its pathway is glycan biosynthesis; glycogen biosynthesis. Its activity is regulated as follows. Allosteric activation by glucose-6-phosphate. Phosphorylation reduces the activity towards UDP-glucose. When in the non-phosphorylated state, glycogen synthase does not require glucose-6-phosphate as an allosteric activator; when phosphorylated it does. In terms of biological role, glycogen synthase participates in the glycogen biosynthetic process along with glycogenin and glycogen branching enzyme. Extends the primer composed of a few glucose units formed by glycogenin by adding new glucose units to it. In this context, glycogen synthase transfers the glycosyl residue from UDP-Glc to the non-reducing end of alpha-1,4-glucan. This Bos taurus (Bovine) protein is Glycogen [starch] synthase, muscle (GYS1).